The sequence spans 212 residues: Nucleoredoxin-like protein 1 (212 aa).

The Thioredoxin domain maps to 1 to 164 (MASLFSGRIL…AAEVLDRNFQ (164 aa)). The interval 191-212 (AARGGRDPGGGGGEEGGAGGLF) is disordered. Residues 197–212 (DPGGGGGEEGGAGGLF) show a composition bias toward gly residues.

This sequence belongs to the nucleoredoxin family. In terms of assembly, interacts with isoform 1 of BSG.

The protein localises to the cell projection. The protein resides in the cilium. Its subcellular location is the photoreceptor outer segment. In terms of biological role, plays an important role in retinal cone photoreceptor survival. In association with glucose transporter SLC16A1/GLUT1 and BSG, promotes retinal cone survival by enhancing aerobic glycolysis and accelerating the entry of glucose into photoreceptors. May play a role in cone cell viability, slowing down cone degeneration, does not seem to play a role in degenerating rods. This chain is Nucleoredoxin-like protein 1 (NXNL1), found in Homo sapiens (Human).